The primary structure comprises 102 residues: NADH-quinone oxidoreductase subunit K (102 aa).

Transmembrane regions (helical) follow at residues 5–25, 31–51, and 65–85; these read LSHY…GIFL, IVIL…MVAF, and LFIL…LVVF.

The protein belongs to the complex I subunit 4L family. NDH-1 is composed of 14 different subunits. Subunits NuoA, H, J, K, L, M, N constitute the membrane sector of the complex.

The protein resides in the cell inner membrane. It catalyses the reaction a quinone + NADH + 5 H(+)(in) = a quinol + NAD(+) + 4 H(+)(out). In terms of biological role, NDH-1 shuttles electrons from NADH, via FMN and iron-sulfur (Fe-S) centers, to quinones in the respiratory chain. The immediate electron acceptor for the enzyme in this species is believed to be ubiquinone. Couples the redox reaction to proton translocation (for every two electrons transferred, four hydrogen ions are translocated across the cytoplasmic membrane), and thus conserves the redox energy in a proton gradient. The chain is NADH-quinone oxidoreductase subunit K from Rhizobium leguminosarum bv. trifolii (strain WSM2304).